The following is a 194-amino-acid chain: FMN-dependent NADH:quinone oxidoreductase (194 aa).

FMN-binding positions include serine 10 and 90–93 (MYNL).

This sequence belongs to the azoreductase type 1 family. As to quaternary structure, homodimer. Requires FMN as cofactor.

The catalysed reaction is 2 a quinone + NADH + H(+) = 2 a 1,4-benzosemiquinone + NAD(+). The enzyme catalyses N,N-dimethyl-1,4-phenylenediamine + anthranilate + 2 NAD(+) = 2-(4-dimethylaminophenyl)diazenylbenzoate + 2 NADH + 2 H(+). Its function is as follows. Quinone reductase that provides resistance to thiol-specific stress caused by electrophilic quinones. Functionally, also exhibits azoreductase activity. Catalyzes the reductive cleavage of the azo bond in aromatic azo compounds to the corresponding amines. In Haemophilus influenzae (strain PittEE), this protein is FMN-dependent NADH:quinone oxidoreductase.